The primary structure comprises 313 residues: Ribosomal RNA small subunit methyltransferase H (313 aa).

S-adenosyl-L-methionine is bound by residues 33-35, Asp53, Phe80, Asp102, and Gln109; that span reads GGH. The segment at 291–313 is disordered; sequence SDEEMRANPRAQSAKLRAAEKIR.

It belongs to the methyltransferase superfamily. RsmH family.

Its subcellular location is the cytoplasm. The enzyme catalyses cytidine(1402) in 16S rRNA + S-adenosyl-L-methionine = N(4)-methylcytidine(1402) in 16S rRNA + S-adenosyl-L-homocysteine + H(+). In terms of biological role, specifically methylates the N4 position of cytidine in position 1402 (C1402) of 16S rRNA. This Heliobacterium modesticaldum (strain ATCC 51547 / Ice1) protein is Ribosomal RNA small subunit methyltransferase H.